We begin with the raw amino-acid sequence, 137 residues long: Nucleoside diphosphate kinase (137 aa).

Lys-10, Phe-58, Arg-86, Thr-92, Arg-103, and Asn-113 together coordinate ATP. The active-site Pros-phosphohistidine intermediate is the His-116.

It belongs to the NDK family. Homotetramer. It depends on Mg(2+) as a cofactor.

The protein resides in the cytoplasm. The catalysed reaction is a 2'-deoxyribonucleoside 5'-diphosphate + ATP = a 2'-deoxyribonucleoside 5'-triphosphate + ADP. It carries out the reaction a ribonucleoside 5'-diphosphate + ATP = a ribonucleoside 5'-triphosphate + ADP. Functionally, major role in the synthesis of nucleoside triphosphates other than ATP. The ATP gamma phosphate is transferred to the NDP beta phosphate via a ping-pong mechanism, using a phosphorylated active-site intermediate. The chain is Nucleoside diphosphate kinase from Helicobacter acinonychis (strain Sheeba).